The following is a 507-amino-acid chain: Fluoroacetaldehyde dehydrogenase (507 aa).

Residue 219-225 (GFGIEAG) coordinates NAD(+). Active-site residues include E263 and C302.

This sequence belongs to the aldehyde dehydrogenase family. As to quaternary structure, homotetramer.

The enzyme catalyses fluoroacetaldehyde + NAD(+) + H2O = fluoroacetate + NADH + 2 H(+). Catalyzes the oxidation of fluoroacetaldehyde to fluoroacetate. Has high affinity for fluoroacetate and glycolaldehyde but not for acetaldehyde. This chain is Fluoroacetaldehyde dehydrogenase, found in Streptantibioticus cattleyicolor (strain ATCC 35852 / DSM 46488 / JCM 4925 / NBRC 14057 / NRRL 8057) (Streptomyces cattleya).